Here is a 972-residue protein sequence, read N- to C-terminus: DNA topoisomerase 1 (972 aa).

Disordered regions lie at residues 1–210 (MSGD…VFVK) and 300–416 (HEQS…RQKA). Over residues 11 to 31 (IHIQNGGSCEVVQSNGVTTNG) the composition is skewed to polar residues. The span at 32–50 (HGHHHHHHSSSSSSSKHKS) shows a compositional bias: basic residues. Basic and acidic residues-rich tracts occupy residues 51–65 (SSKD…EHKS), 72–86 (SKEH…DRHK), and 93–103 (KHRDKDKERDG). Positions 104–114 (SSNSHRSGSSS) are enriched in low complexity. Over residues 125-138 (SKHKSSSGHHKRSS) the composition is skewed to basic residues. Positions 139–151 (KDKERRDKDKDRG) are enriched in basic and acidic residues. The span at 173–183 (SHKSSSSSSSS) shows a compositional bias: low complexity. Residue serine 303 is modified to Phosphoserine. At tyrosine 304 the chain carries Phosphotyrosine. A compositionally biased stretch (acidic residues) spans 316–330 (HDDDADEMNDDEEDV). 3 interaction with DNA regions span residues 648-649 (KY), 711-716 (RAGNEK), and 807-809 (TAK). In terms of domain architecture, Topo IB-type catalytic spans 655 to 972 (SSKLKGEKDH…VHMADENYRF (318 aa)). Tyrosine 930 serves as the catalytic O-(3'-phospho-DNA)-tyrosine intermediate.

This sequence belongs to the type IB topoisomerase family. As to quaternary structure, interacts with Topors.

It is found in the nucleus. The protein resides in the cytoplasm. The enzyme catalyses ATP-independent breakage of single-stranded DNA, followed by passage and rejoining.. Releases the supercoiling and torsional tension of DNA introduced during the DNA replication and transcription by transiently cleaving and rejoining one strand of the DNA duplex. Introduces a single-strand break via transesterification at a target site in duplex DNA. The scissile phosphodiester is attacked by the catalytic tyrosine of the enzyme, resulting in the formation of a DNA-(3'-phosphotyrosyl)-enzyme intermediate and the expulsion of a 5'-OH DNA strand. The free DNA strand then undergoes passage around the unbroken strand thus removing DNA supercoils. Finally, in the religation step, the DNA 5'-OH attacks the covalent intermediate to expel the active-site tyrosine and restore the DNA phosphodiester backbone. The polypeptide is DNA topoisomerase 1 (Drosophila melanogaster (Fruit fly)).